Consider the following 330-residue polypeptide: Beta-ketoacyl-[acyl-carrier-protein] synthase III (330 aa).

Active-site residues include C115 and H255. The ACP-binding stretch occupies residues 256–260 (QANFR). N285 is an active-site residue.

It belongs to the thiolase-like superfamily. FabH family. Homodimer.

The protein resides in the cytoplasm. The catalysed reaction is malonyl-[ACP] + acetyl-CoA + H(+) = 3-oxobutanoyl-[ACP] + CO2 + CoA. Its pathway is lipid metabolism; fatty acid biosynthesis. Functionally, catalyzes the condensation reaction of fatty acid synthesis by the addition to an acyl acceptor of two carbons from malonyl-ACP. Catalyzes the first condensation reaction which initiates fatty acid synthesis and may therefore play a role in governing the total rate of fatty acid production. Possesses both acetoacetyl-ACP synthase and acetyl transacylase activities. Its substrate specificity determines the biosynthesis of branched-chain and/or straight-chain of fatty acids. The chain is Beta-ketoacyl-[acyl-carrier-protein] synthase III from Helicobacter pylori (strain P12).